The sequence spans 1224 residues: A disintegrin and metalloproteinase with thrombospondin motifs 16 (1224 aa).

The N-terminal stretch at 1-24 (MKPRARGWRGLAALWMLLAQVAEQ) is a signal peptide. Residues 25-279 (APACAMGPAA…EYKSCLRHKR (255 aa)) constitute a propeptide that is removed on maturation. The disordered stretch occupies residues 31–53 (GPAAAAPGSPSVPRPPPPAERPG). The span at 40-50 (PSVPRPPPPAE) shows a compositional bias: pro residues. Residue Asn-156 is glycosylated (N-linked (GlcNAc...) asparagine). Residues 247–254 (HFCGRRKK) carry the Cysteine switch motif. Cys-249 is a binding site for Zn(2+). The 206-residue stretch at 290–495 (LNVETLVVVD…AQAICLADQP (206 aa)) folds into the Peptidase M12B domain. Asn-310 is a glycosylation site (N-linked (GlcNAc...) asparagine). Cystine bridges form between Cys-366-Cys-417, Cys-392-Cys-399, Cys-411-Cys-490, Cys-450-Cys-474, Cys-518-Cys-543, Cys-529-Cys-550, Cys-538-Cys-569, Cys-563-Cys-574, Cys-598-Cys-635, Cys-602-Cys-640, and Cys-613-Cys-625. Position 433 (His-433) interacts with Zn(2+). Residue Glu-434 is part of the active site. Zn(2+)-binding residues include His-437 and His-443. The Disintegrin domain maps to 496–585 (KPVKEYKYPE…KYGDEGPKPT (90 aa)). The TSP type-1 1 domain occupies 586-641 (HGHWSDWSSWSPCSRTCGGGVSHRSRLCTNPKPSHGGKFCEGSTRTLKLCNSQKCP). Asn-741, Asn-780, Asn-835, Asn-905, and Asn-935 each carry an N-linked (GlcNAc...) asparagine glycan. The interval 747–873 (IHRGLYTKHH…KQPPAQPSYT (127 aa)) is spacer. 5 TSP type-1 domains span residues 874-922 (WAIV…LVPC), 927-987 (CPPS…QSCP), 988-1048 (PAWS…QRCH), 1051-1115 (KKLQ…LPCP), and 1127-1181 (RGSW…HFCP). Disulfide bonds link Cys-939–Cys-981, Cys-943–Cys-986, and Cys-954–Cys-970. The PLAC domain maps to 1186–1223 (KDAFCKDYFHWCYLVPQHGMCSHKFYGKQCCKTCSKSN).

It depends on Zn(2+) as a cofactor. The precursor is cleaved by a furin endopeptidase. Post-translationally, glycosylated. Can be O-fucosylated by POFUT2 on a serine or a threonine residue found within the consensus sequence C1-X(2)-(S/T)-C2-G of the TSP type-1 repeat domains where C1 and C2 are the first and second cysteine residue of the repeat, respectively. Fucosylated repeats can then be further glycosylated by the addition of a beta-1,3-glucose residue by the glucosyltransferase, B3GALTL. Fucosylation mediates the efficient secretion of ADAMTS family members. Can also be C-glycosylated with one or two mannose molecules on tryptophan residues within the consensus sequence W-X-X-W of the TPRs, and N-glycosylated. These other glycosylations can also facilitate secretion. As to expression, expressed in fetal lung and kidney and in adult prostate and ovary.

It is found in the secreted. The protein resides in the extracellular space. It localises to the extracellular matrix. This Homo sapiens (Human) protein is A disintegrin and metalloproteinase with thrombospondin motifs 16 (ADAMTS16).